A 107-amino-acid polypeptide reads, in one-letter code: Sperm-specific class P protein 31 (107 aa).

The 107-residue stretch at 1–107 (MINIDPPSGD…GEVVVKMVAS (107 aa)) folds into the MSP domain.

Expressed at higher level in testis.

This is Sperm-specific class P protein 31 (ssp-31) from Caenorhabditis elegans.